A 288-amino-acid polypeptide reads, in one-letter code: Carbon monoxide dehydrogenase medium chain (288 aa).

In terms of domain architecture, FAD-binding PCMH-type spans 1 to 177; sequence MIPGSFDYHR…TAIRIPVPPT (177 aa). FAD contacts are provided by residues 32–36 and 111–115; these read AGGHS and TIGGN.

As to quaternary structure, dimer of heterotrimers. Each heterotrimer consists of a large, a medium and a small subunit. Requires FAD as cofactor.

It catalyses the reaction CO + a quinone + H2O = a quinol + CO2. In terms of biological role, catalyzes the oxidation of carbon monoxide to carbon dioxide. The polypeptide is Carbon monoxide dehydrogenase medium chain (coxM) (Afipia carboxidovorans (strain ATCC 49405 / DSM 1227 / KCTC 32145 / OM5) (Oligotropha carboxidovorans)).